A 259-amino-acid polypeptide reads, in one-letter code: Dickkopf-related protein 2 (259 aa).

The N-terminal stretch at 1 to 33 is a signal peptide; that stretch reads MAALMRSKDSSCCLLLLAAVLMVESSQIGSSRA. Residue Asn52 is glycosylated (N-linked (GlcNAc...) asparagine). A DKK-type Cys-1 region spans residues 78–127; that stretch reads CSSDKECEVGRYCHSPHQGSSACMVCRRKKKRCHRDGMCCPSTRCNNGIC. 5 cysteine pairs are disulfide-bonded: Cys183/Cys195, Cys189/Cys204, Cys194/Cys231, Cys214/Cys239, and Cys233/Cys256. The tract at residues 183 to 256 is DKK-type Cys-2; it reads CLRSSDCIEG…YSSKARLHVC (74 aa).

The protein belongs to the dickkopf family. In terms of assembly, interacts with LRP5 and LRP6. Post-translationally, may be proteolytically processed by a furin-like protease. In terms of tissue distribution, expressed in heart, brain, skeletal muscle and lung.

The protein localises to the secreted. In terms of biological role, antagonizes canonical Wnt signaling by inhibiting LRP5/6 interaction with Wnt and by forming a ternary complex with the transmembrane protein KREMEN that promotes internalization of LRP5/6. DKKs play an important role in vertebrate development, where they locally inhibit Wnt regulated processes such as antero-posterior axial patterning, limb development, somitogenesis and eye formation. In the adult, Dkks are implicated in bone formation and bone disease, cancer and Alzheimer disease. The polypeptide is Dickkopf-related protein 2 (DKK2) (Homo sapiens (Human)).